Consider the following 422-residue polypeptide: UDP-N-acetylglucosamine 1-carboxyvinyltransferase (422 aa).

22–23 (KN) is a phosphoenolpyruvate binding site. Arg95 lines the UDP-N-acetyl-alpha-D-glucosamine pocket. Cys119 functions as the Proton donor in the catalytic mechanism. At Cys119 the chain carries 2-(S-cysteinyl)pyruvic acid O-phosphothioketal. UDP-N-acetyl-alpha-D-glucosamine is bound by residues 124-128 (RPIDQ), Asp309, and Val331.

This sequence belongs to the EPSP synthase family. MurA subfamily.

The protein resides in the cytoplasm. The catalysed reaction is phosphoenolpyruvate + UDP-N-acetyl-alpha-D-glucosamine = UDP-N-acetyl-3-O-(1-carboxyvinyl)-alpha-D-glucosamine + phosphate. It functions in the pathway cell wall biogenesis; peptidoglycan biosynthesis. Its function is as follows. Cell wall formation. Adds enolpyruvyl to UDP-N-acetylglucosamine. The protein is UDP-N-acetylglucosamine 1-carboxyvinyltransferase of Anaeromyxobacter dehalogenans (strain 2CP-C).